The primary structure comprises 106 residues: Large ribosomal subunit protein uL24 (106 aa).

It belongs to the universal ribosomal protein uL24 family. Part of the 50S ribosomal subunit.

Functionally, one of two assembly initiator proteins, it binds directly to the 5'-end of the 23S rRNA, where it nucleates assembly of the 50S subunit. Its function is as follows. One of the proteins that surrounds the polypeptide exit tunnel on the outside of the subunit. This is Large ribosomal subunit protein uL24 from Bordetella petrii (strain ATCC BAA-461 / DSM 12804 / CCUG 43448).